A 339-amino-acid chain; its full sequence is Cathepsin B (339 aa).

The signal sequence occupies residues 1–17 (MWQLWASLCCLLALADA). The propeptide at 18-79 (RSRPSFHPLS…QRVMFTEDLK (62 aa)) is activation peptide. Intrachain disulfides connect cysteine 93/cysteine 122, cysteine 105/cysteine 150, cysteine 141/cysteine 207, cysteine 142/cysteine 146, cysteine 179/cysteine 211, and cysteine 187/cysteine 198. Cysteine 108 is a catalytic residue. Asparagine 192 carries an N-linked (GlcNAc...) asparagine glycan. Position 220 is an N6-acetyllysine (lysine 220). Residues histidine 278 and asparagine 298 contribute to the active site. The propeptide occupies 334-339 (QYWEKI).

It belongs to the peptidase C1 family. As to quaternary structure, dimer of a heavy chain and a light chain cross-linked by a disulfide bond. Interacts with SRPX2. Directly interacts with SHKBP1.

The protein localises to the lysosome. Its subcellular location is the melanosome. The protein resides in the secreted. It localises to the extracellular space. It is found in the apical cell membrane. The catalysed reaction is Hydrolysis of proteins with broad specificity for peptide bonds. Preferentially cleaves -Arg-Arg-|-Xaa bonds in small molecule substrates (thus differing from cathepsin L). In addition to being an endopeptidase, shows peptidyl-dipeptidase activity, liberating C-terminal dipeptides.. Functionally, thiol protease which is believed to participate in intracellular degradation and turnover of proteins. Cleaves matrix extracellular phosphoglycoprotein MEPE. Involved in the solubilization of cross-linked TG/thyroglobulin in the thyroid follicle lumen. Has also been implicated in tumor invasion and metastasis. The sequence is that of Cathepsin B (CTSB) from Pongo abelii (Sumatran orangutan).